We begin with the raw amino-acid sequence, 629 residues long: tRNA uridine 5-carboxymethylaminomethyl modification enzyme MnmG (629 aa).

FAD-binding positions include 14–19, Val126, and Ser181; that span reads GAGHAG. 273 to 287 provides a ligand contact to NAD(+); the sequence is GPRYCPSIEDKVVRF. Gln370 contacts FAD.

The protein belongs to the MnmG family. As to quaternary structure, homodimer. Heterotetramer of two MnmE and two MnmG subunits. Requires FAD as cofactor.

Its subcellular location is the cytoplasm. Its function is as follows. NAD-binding protein involved in the addition of a carboxymethylaminomethyl (cmnm) group at the wobble position (U34) of certain tRNAs, forming tRNA-cmnm(5)s(2)U34. In Bacillus thuringiensis (strain Al Hakam), this protein is tRNA uridine 5-carboxymethylaminomethyl modification enzyme MnmG.